Reading from the N-terminus, the 75-residue chain is Cruzioseptin-8 (75 aa).

An N-terminal signal peptide occupies residues 1–22; sequence MAFLKKCLFLVLFLGLVSLSIC. Residues 23 to 43 constitute a propeptide that is removed on maturation; the sequence is EEEKREEENEEVQEDDDQSEE. Residues 25–44 form a disordered region; sequence EKREEENEEVQEDDDQSEEK. A compositionally biased stretch (acidic residues) spans 30–41; the sequence is ENEEVQEDDDQS. Q72 carries the post-translational modification Glutamine amide. Positions 74–75 are excised as a propeptide; that stretch reads EQ.

Expressed by the skin glands.

It is found in the secreted. Functionally, has antimicrobial activity. The polypeptide is Cruzioseptin-8 (Cruziohyla calcarifer (Splendid leaf frog)).